We begin with the raw amino-acid sequence, 349 residues long: Histidinol-phosphate aminotransferase (349 aa).

K210 carries the post-translational modification N6-(pyridoxal phosphate)lysine.

The protein belongs to the class-II pyridoxal-phosphate-dependent aminotransferase family. Histidinol-phosphate aminotransferase subfamily. As to quaternary structure, homodimer. Pyridoxal 5'-phosphate serves as cofactor.

The enzyme catalyses L-histidinol phosphate + 2-oxoglutarate = 3-(imidazol-4-yl)-2-oxopropyl phosphate + L-glutamate. The protein operates within amino-acid biosynthesis; L-histidine biosynthesis; L-histidine from 5-phospho-alpha-D-ribose 1-diphosphate: step 7/9. The sequence is that of Histidinol-phosphate aminotransferase from Flavobacterium johnsoniae (strain ATCC 17061 / DSM 2064 / JCM 8514 / BCRC 14874 / CCUG 350202 / NBRC 14942 / NCIMB 11054 / UW101) (Cytophaga johnsonae).